Consider the following 834-residue polypeptide: 5-hydroxytryptamine receptor 2A (834 aa).

Residues Met1–Ser230 lie on the Extracellular side of the membrane. Residues Thr56–Ser75 form a disordered region. Residues Asn68, Asn97, Asn161, Asn175, Asn183, Asn194, Asn203, and Asn209 are each glycosylated (N-linked (GlcNAc...) asparagine). A helical transmembrane segment spans residues Val231–Leu253. The Cytoplasmic portion of the chain corresponds to Glu254–Tyr263. Residues Leu264 to Val285 traverse the membrane as a helical segment. Residues Tyr286–Asp300 are Extracellular-facing. Cys299 and Cys378 are oxidised to a cystine. Residues Ile301–Val322 traverse the membrane as a helical segment. At Asp323–Arg341 the chain is on the cytoplasmic side. A helical membrane pass occupies residues Val342–Trp364. Residues Lys365–Thr391 lie on the Extracellular side of the membrane. Residues Cys392 to Ala413 traverse the membrane as a helical segment. Residues Arg414–Thr752 lie on the Cytoplasmic side of the membrane. 5 disordered regions span residues Arg420 to Thr442, Lys460 to Gly516, Gln531 to Gln599, Leu617 to Ala640, and Ser674 to Ala743. 2 stretches are compositionally biased toward polar residues: residues Gly482–Asp502 and Gln532–Ala542. Positions Arg551 to Gln564 are enriched in basic and acidic residues. Acidic residues predominate over residues Glu565 to Glu575. Positions Thr582 to Thr593 are enriched in low complexity. Polar residues predominate over residues Ser674–Ser694. Over residues Gln702–Gln723 the composition is skewed to low complexity. The chain crosses the membrane as a helical span at residues Leu753 to Leu776. The Extracellular portion of the chain corresponds to Cys777–Ser785. The helical transmembrane segment at Val786–Phe808 threads the bilayer. Over Ser809 to Leu834 the chain is Cytoplasmic.

The protein belongs to the G-protein coupled receptor 1 family.

Its subcellular location is the cell membrane. In terms of biological role, this is one of the several different receptors for 5-hydroxytryptamine (serotonin), a biogenic hormone that functions as a neurotransmitter, a hormone, and a mitogen. The activity of this receptor is mediated by G proteins which inhibit adenylate cyclase. In Drosophila melanogaster (Fruit fly), this protein is 5-hydroxytryptamine receptor 2A (5-HT1A).